Consider the following 432-residue polypeptide: Adenylosuccinate synthetase (432 aa).

Residues 13-19 (GDEGKGK) and 41-43 (GHT) each bind GTP. The active-site Proton acceptor is the Asp-14. Mg(2+) is bound by residues Asp-14 and Gly-41. Residues 14 to 17 (DEGK), 39 to 42 (NAGH), Thr-130, Arg-144, Gln-225, Thr-240, and Arg-304 contribute to the IMP site. His-42 serves as the catalytic Proton donor. Residue 300 to 306 (ATTGRRR) coordinates substrate. Residues Arg-306, 332 to 334 (KLD), and 415 to 417 (STG) contribute to the GTP site.

The protein belongs to the adenylosuccinate synthetase family. In terms of assembly, homodimer. The cofactor is Mg(2+).

Its subcellular location is the cytoplasm. The enzyme catalyses IMP + L-aspartate + GTP = N(6)-(1,2-dicarboxyethyl)-AMP + GDP + phosphate + 2 H(+). It participates in purine metabolism; AMP biosynthesis via de novo pathway; AMP from IMP: step 1/2. Functionally, plays an important role in the de novo pathway of purine nucleotide biosynthesis. Catalyzes the first committed step in the biosynthesis of AMP from IMP. This is Adenylosuccinate synthetase from Salmonella paratyphi C (strain RKS4594).